A 446-amino-acid polypeptide reads, in one-letter code: MEGTKKYISVGELEKHNQLGDVWISIQGKVYNVTDWIKKHPGGDVPIMNLAGQDATDAFIAYHPGTAWKNLENLFTGYHLEDYLVSEISKDYRKLASEFSKAGLFEKKGHTVIYCLSFIALLLCGCVYGVLCSNSLWVHMLSGAMLGMCFIQAAYLGHDSGHYTMMSSKGYNKFAQVLNGNCLTGISIAWWKWTHNAHHIACNSLDYDPDLQHLPVFAVPSSFFKSLTSRFYGRELTFDGLSRFLVSYQHFTIYLVMIFGRINLYVQTFLLLFSTRKVPDRALNIIGILVYWTWFPYLVSCLPNWNERVLFVLTCFSVTALQHIQFTLNHFAADVYVGPPTGTNWFEKQAAGTIDISCSSWMDWFFGGLQFQLEHHLFPRMPRCQLRNISPIVQDYCKKHNLPYRSLSFFDANVATIKTLRTAALQARDLTVVPQNLLWEAFNTHG.

In terms of domain architecture, Cytochrome b5 heme-binding spans 5–89 (KKYISVGELE…LEDYLVSEIS (85 aa)). Heme-binding residues include His-40 and His-63. Helical transmembrane passes span 112-132 (VIYCLSFIALLLCGCVYGVLC) and 136-156 (LWVHMLSGAMLGMCFIQAAYL). The Histidine box-1 motif lies at 158 to 162 (HDSGH). The next 4 membrane-spanning stretches (helical) occupy residues 174–195 (FAQVLNGNCLTGISIAWWKWTH), 253–273 (IYLVMIFGRINLYVQTFLLLF), 282–302 (ALNIIGILVYWTWFPYLVSCL), and 309–329 (VLFVLTCFSVTALQHIQFTLN). A Histidine box-2 motif is present at residues 195 to 199 (HNAHH). The Histidine box-3 signature appears at 372 to 376 (QLEHH).

Belongs to the fatty acid desaturase type 1 family. Requires Fe cation as cofactor. Expressed only in young leaves.

It is found in the membrane. The catalysed reaction is an N-acyl-(4R)-4-hydroxysphinganine + 2 Fe(II)-[cytochrome b5] + O2 + 2 H(+) = a (4R,8E)-4-hydroxysphingenine ceramide + 2 Fe(III)-[cytochrome b5] + 2 H2O. The enzyme catalyses an N-acyl-(4R)-4-hydroxysphinganine + 2 Fe(II)-[cytochrome b5] + O2 + 2 H(+) = a (4R,8Z)-4-hydroxysphing-8-enine ceramide + 2 Fe(III)-[cytochrome b5] + 2 H2O. Plays a major role as delta(8)-fatty-acid desaturase which introduces a double bond at the 8-position in the long-chain base (LCB) of ceramides with or without a hydroxy group at the 4-position. The enzyme produces both the 8E and 8Z isomers (in a 4:1 ratio). This structural modification contributes to the quantitative partitioning of ceramides between the two major sphingolipid classes, glucosylceramides and glycosylinositolphosphoryl ceramides. Sphingolipids are important membrane components involved in environmental stress responses, such as resistance to chilling, and act as cell signaling molecules. The protein is Delta(8)-fatty-acid desaturase (sld1) of Borago officinalis (Bourrache).